A 291-amino-acid chain; its full sequence is MSCQAFTSADTFIPLNSDASATLPLIMHHSAAECLPVSNHATNVMSTATGLHYSVPSCHYGNQPSTYGVMAGSLTLVFYKFPDHTLSHGFPPIHQPLLAEDPTAADFKQELRRKSKLVEEPIDMDSPEIRELEKFANEFKVRRIKLGYTQTNVGEALAAVHGSEFSQTTICRFENLQLSFKNACKLKAILSKWLEEAEQVGALYNEKVGANERKRKRRTTISIAAKDALERHFGEQNKPSSQEIMRMAEELNLEKEVVRVWFCNRRQREKRVKTSLNQSLFSISKEHLECR.

The short motif at 5–13 (AFTSADTFI) is the 9aaTAD element. One can recognise a POU-specific domain in the interval 124–198 (MDSPEIRELE…ILSKWLEEAE (75 aa)). The segment at residues 214 to 273 (KRKRRTTISIAAKDALERHFGEQNKPSSQEIMRMAEELNLEKEVVRVWFCNRRQREKRVK) is a DNA-binding region (homeobox).

Belongs to the POU transcription factor family. Class-1 subfamily. Interacts with PITX1. Interacts with LHX3. Interacts with ELK1.

Its subcellular location is the nucleus. In terms of biological role, transcription factor involved in the specification of the lactotrope, somatotrope, and thyrotrope phenotypes in the developing anterior pituitary. Activates growth hormone and prolactin genes. Specifically binds to the consensus sequence 5'-TAAAT-3'. This Macaca mulatta (Rhesus macaque) protein is Pituitary-specific positive transcription factor 1 (POU1F1).